The sequence spans 168 residues: HTH-type transcriptional regulator IscR (168 aa).

In terms of domain architecture, HTH rrf2-type spans 2-131; the sequence is KLTSKGRYAV…NNITLGELMS (130 aa). A DNA-binding region (H-T-H motif) is located at residues 28–51; the sequence is LADISERQGISLSYLEQLFSKLRK. Positions 92, 98, and 104 each coordinate [2Fe-2S] cluster.

Requires [2Fe-2S] cluster as cofactor.

Regulates the transcription of several operons and genes involved in the biogenesis of Fe-S clusters and Fe-S-containing proteins. In Vibrio vulnificus (strain CMCP6), this protein is HTH-type transcriptional regulator IscR.